An 88-amino-acid polypeptide reads, in one-letter code: Small ribosomal subunit protein bS20 (88 aa).

Disordered stretches follow at residues M1 to A23 and G65 to A88.

This sequence belongs to the bacterial ribosomal protein bS20 family.

Its function is as follows. Binds directly to 16S ribosomal RNA. This Rhizobium meliloti (strain 1021) (Ensifer meliloti) protein is Small ribosomal subunit protein bS20.